Here is a 660-residue protein sequence, read N- to C-terminus: DNA ligase (660 aa).

Residues 33 to 37, 82 to 83, and Glu110 each bind NAD(+); these read DFVYD and SL. Catalysis depends on Lys112, which acts as the N6-AMP-lysine intermediate. NAD(+) contacts are provided by Arg133, Glu167, Lys281, and Lys305. 4 residues coordinate Zn(2+): Cys396, Cys399, Cys412, and Cys417. Residues 583 to 660 enclose the BRCT domain; the sequence is GENKLLAGKK…SFEDIKSYLD (78 aa).

It belongs to the NAD-dependent DNA ligase family. LigA subfamily. It depends on Mg(2+) as a cofactor. Requires Mn(2+) as cofactor.

It carries out the reaction NAD(+) + (deoxyribonucleotide)n-3'-hydroxyl + 5'-phospho-(deoxyribonucleotide)m = (deoxyribonucleotide)n+m + AMP + beta-nicotinamide D-nucleotide.. Functionally, DNA ligase that catalyzes the formation of phosphodiester linkages between 5'-phosphoryl and 3'-hydroxyl groups in double-stranded DNA using NAD as a coenzyme and as the energy source for the reaction. It is essential for DNA replication and repair of damaged DNA. This Borreliella burgdorferi (strain ATCC 35210 / DSM 4680 / CIP 102532 / B31) (Borrelia burgdorferi) protein is DNA ligase.